Here is a 239-residue protein sequence, read N- to C-terminus: MKLSTIFTAFAATIATVAGYETTGSKQTVDILIDYIIKETPELSQNDVANWENGDTVTLQYVVNNNEESEITVVGVTGQFKNPINNEIVTNLTTGKVGPIAVPPGEAIKFDQKINVDLIPANYELIPHVFIAQDSLIKVIPCRGQLATIVDAAVSFFDPRLIFLELVLLITFAGLIYVGYEIWGKQYFKGVAPVKAKKVSAAKASSPVASGPSTTSATGYDTNWIPESHLKQKKTKKVN.

The first 19 residues, Met1–Gly19, serve as a signal peptide directing secretion. Topologically, residues Tyr20–Leu161 are lumenal. Residues Ile162 to Ile182 form a helical membrane-spanning segment. Topologically, residues Trp183–Asn239 are cytoplasmic. The span at Ala201–Ser213 shows a compositional bias: low complexity. The tract at residues Ala201–Thr222 is disordered.

The protein belongs to the IRC22 family.

It is found in the endoplasmic reticulum membrane. Functionally, is probably involved in a pathway contributing to genomic integrity. The protein is Increased recombination centers protein 22-2 (IRC22-2) of Candida albicans (strain WO-1) (Yeast).